The following is a 227-amino-acid chain: Ribonuclease 3 (227 aa).

Positions 6–128 constitute an RNase III domain; it reads ASDYQQRIGY…VIAAIYLDAD (123 aa). Glutamate 41 is a binding site for Mg(2+). Residue aspartate 45 is part of the active site. Mg(2+)-binding residues include aspartate 114 and glutamate 117. The active site involves glutamate 117. The 71-residue stretch at 155–225 folds into the DRBM domain; the sequence is DPKTRLQEWL…ASHAIDQLDS (71 aa). A compositionally biased stretch (basic and acidic residues) spans 203 to 212; the sequence is GEGSSRRLAE. The interval 203 to 227 is disordered; sequence GEGSSRRLAEQDAASHAIDQLDSNK.

It belongs to the ribonuclease III family. Homodimer. The cofactor is Mg(2+).

It is found in the cytoplasm. It carries out the reaction Endonucleolytic cleavage to 5'-phosphomonoester.. Functionally, digests double-stranded RNA. Involved in the processing of primary rRNA transcript to yield the immediate precursors to the large and small rRNAs (23S and 16S). Processes some mRNAs, and tRNAs when they are encoded in the rRNA operon. Processes pre-crRNA and tracrRNA of type II CRISPR loci if present in the organism. This is Ribonuclease 3 from Xylella fastidiosa (strain M23).